The following is a 96-amino-acid chain: Conotoxin Mr15.1 (96 aa).

The N-terminal stretch at 1 to 20 (MSTLKMMLLILLLLLPLATF) is a signal peptide. Residues 21-57 (DSDGQAIPGGGIPSAVNSRVGRLLGGDEKSGRSLEKR) constitute a propeptide that is removed on maturation.

This sequence belongs to the conotoxin N superfamily. In terms of processing, contains 4 disulfide bonds. In terms of tissue distribution, expressed by the venom duct.

It localises to the secreted. The chain is Conotoxin Mr15.1 from Conus marmoreus (Marble cone).